The chain runs to 194 residues: ATP-dependent Clp protease proteolytic subunit 3 (194 aa).

The Nucleophile role is filled by Ser96. Residue His121 is part of the active site.

Belongs to the peptidase S14 family. In terms of assembly, fourteen ClpP subunits assemble into 2 heptameric rings which stack back to back to give a disk-like structure with a central cavity, resembling the structure of eukaryotic proteasomes.

It is found in the cytoplasm. The enzyme catalyses Hydrolysis of proteins to small peptides in the presence of ATP and magnesium. alpha-casein is the usual test substrate. In the absence of ATP, only oligopeptides shorter than five residues are hydrolyzed (such as succinyl-Leu-Tyr-|-NHMec, and Leu-Tyr-Leu-|-Tyr-Trp, in which cleavage of the -Tyr-|-Leu- and -Tyr-|-Trp bonds also occurs).. Its function is as follows. Cleaves peptides in various proteins in a process that requires ATP hydrolysis. Has a chymotrypsin-like activity. Plays a major role in the degradation of misfolded proteins. The sequence is that of ATP-dependent Clp protease proteolytic subunit 3 from Rhizobium etli (strain ATCC 51251 / DSM 11541 / JCM 21823 / NBRC 15573 / CFN 42).